The following is a 364-amino-acid chain: Chorismate synthase (364 aa).

The segment at 41–60 is disordered; that stretch reads MQHDLDRRRPGTSRYTTARR. NADP(+) is bound by residues Arg-48 and Arg-54. FMN is bound by residues 125–127, 238–239, Gly-278, 293–297, and Arg-319; these read RSS, NA, and KPTSS.

The protein belongs to the chorismate synthase family. As to quaternary structure, homotetramer. FMNH2 serves as cofactor.

The catalysed reaction is 5-O-(1-carboxyvinyl)-3-phosphoshikimate = chorismate + phosphate. It participates in metabolic intermediate biosynthesis; chorismate biosynthesis; chorismate from D-erythrose 4-phosphate and phosphoenolpyruvate: step 7/7. Catalyzes the anti-1,4-elimination of the C-3 phosphate and the C-6 proR hydrogen from 5-enolpyruvylshikimate-3-phosphate (EPSP) to yield chorismate, which is the branch point compound that serves as the starting substrate for the three terminal pathways of aromatic amino acid biosynthesis. This reaction introduces a second double bond into the aromatic ring system. This is Chorismate synthase from Shewanella sp. (strain MR-4).